Consider the following 371-residue polypeptide: 2-aminoethylphosphonate--pyruvate transaminase (371 aa).

N6-(pyridoxal phosphate)lysine is present on lysine 195.

This sequence belongs to the class-V pyridoxal-phosphate-dependent aminotransferase family. PhnW subfamily. As to quaternary structure, homodimer. Pyridoxal 5'-phosphate is required as a cofactor.

The enzyme catalyses (2-aminoethyl)phosphonate + pyruvate = phosphonoacetaldehyde + L-alanine. In terms of biological role, involved in phosphonate degradation. This chain is 2-aminoethylphosphonate--pyruvate transaminase, found in Pseudomonas aeruginosa (strain UCBPP-PA14).